The following is a 92-amino-acid chain: Small ribosomal subunit protein bS20 (92 aa).

Residues 1–23 (MANTPSAKKRAKQAEKRRSHNAS) form a disordered region. Residues 7–20 (AKKRAKQAEKRRSH) are compositionally biased toward basic residues.

The protein belongs to the bacterial ribosomal protein bS20 family.

Binds directly to 16S ribosomal RNA. In Pseudomonas savastanoi pv. phaseolicola (strain 1448A / Race 6) (Pseudomonas syringae pv. phaseolicola (strain 1448A / Race 6)), this protein is Small ribosomal subunit protein bS20.